The sequence spans 415 residues: Homoserine O-acetyltransferase (415 aa).

The region spanning 47–369 (NAVLVCHGLT…HGHDAFLVEP (323 aa)) is the AB hydrolase-1 domain. S155 acts as the Nucleophile in catalysis. Residue R226 coordinates substrate. Residues D329 and H362 contribute to the active site. D363 contributes to the substrate binding site. A disordered region spans residues 387 to 415 (RAVTDTATDGGEPDEEKDFAPVHSSLFSR).

Belongs to the AB hydrolase superfamily. MetX family. As to quaternary structure, homodimer.

It is found in the cytoplasm. It carries out the reaction L-homoserine + acetyl-CoA = O-acetyl-L-homoserine + CoA. It participates in amino-acid biosynthesis; L-methionine biosynthesis via de novo pathway; O-acetyl-L-homoserine from L-homoserine: step 1/1. Its function is as follows. Transfers an acetyl group from acetyl-CoA to L-homoserine, forming acetyl-L-homoserine. This Haloferax gibbonsii (strain ATCC 33959 / DSM 4427 / JCM 8863 / NBRC 102184 / NCIMB 2188 / Ma 2.38) protein is Homoserine O-acetyltransferase.